The chain runs to 70 residues: MKNAIHPEYKEITATCSCGNIVTVGSTAGKNLTLDICGECHPFYTGTQRVVDTGGRIEKFKNRFGALGKK.

Residues cysteine 16, cysteine 18, cysteine 37, and cysteine 40 each contribute to the Zn(2+) site.

Belongs to the bacterial ribosomal protein bL31 family. Type A subfamily. In terms of assembly, part of the 50S ribosomal subunit. Requires Zn(2+) as cofactor.

Binds the 23S rRNA. In Psychromonas ingrahamii (strain DSM 17664 / CCUG 51855 / 37), this protein is Large ribosomal subunit protein bL31.